The chain runs to 366 residues: G-protein coupled receptor 183-B (366 aa).

The Extracellular segment spans residues 1 to 24; that stretch reads MMSPDLDLNFSSNCNLYDHRPVAR. Asparagine 9 is a glycosylation site (N-linked (GlcNAc...) asparagine). The chain crosses the membrane as a helical span at residues 25-50; the sequence is VLIPLVYSIICPVGLLGNALALHVVI. The Cytoplasmic segment spans residues 51–70; it reads SSTTKINSITLYSANLAVSD. Residues 71 to 88 traverse the membrane as a helical segment; it reads ILFCLSLPLRAVYYGLGF. Residues 89 to 98 lie on the Extracellular side of the membrane; that stretch reads HWPMGEVLCK. A disulfide bridge connects residues cysteine 97 and cysteine 175. Residues 99 to 120 form a helical membrane-spanning segment; that stretch reads AIALLFYLNCYAGVNFMTCLAV. Residues 121 to 142 are Cytoplasmic-facing; that stretch reads DRFVALVFPARLAKLRKAKNVR. Residues 143–161 form a helical membrane-spanning segment; the sequence is FVCLAIWLLVLAQTLPLLT. Residues 162 to 187 are Extracellular-facing; sequence IGLTKTEPDSSITCMEYPNFEGVFKG. A helical transmembrane segment spans residues 188-210; that stretch reads LPYMLIVAVVLGFGIPVMTIIAC. Residues 211–236 lie on the Cytoplasmic side of the membrane; sequence YSILTHKLHQAAKSNQLTERSGKTKK. Residues 237-260 traverse the membrane as a helical segment; sequence ARGVIAGVVFVFVVCFSPYHIDIL. Residues 261-280 lie on the Extracellular side of the membrane; sequence QYMIRKLLYETDCKELQSFQ. A helical transmembrane segment spans residues 281–305; sequence ISLHITVCLMNLNSCLDPFVYFFAC. Residues 306 to 366 are Cytoplasmic-facing; it reads KGYKQKVMRM…QQICYQPSAT (61 aa).

The protein belongs to the G-protein coupled receptor 1 family.

It is found in the cell membrane. Functionally, probable receptor for oxysterols that plays a central role during humoral immunity. Promotes activated B-cell localization in the outer follicle and interfollicular regions. This Danio rerio (Zebrafish) protein is G-protein coupled receptor 183-B (gpr183b).